The following is a 343-amino-acid chain: tRNA N6-adenosine threonylcarbamoyltransferase (343 aa).

2 residues coordinate Fe cation: His-120 and His-124. Substrate is bound by residues 142–146 (VVSGG), Asp-175, Gly-188, Asp-192, and Asn-281. Asp-310 is a Fe cation binding site.

Belongs to the KAE1 / TsaD family. It depends on Fe(2+) as a cofactor.

The protein resides in the cytoplasm. It carries out the reaction L-threonylcarbamoyladenylate + adenosine(37) in tRNA = N(6)-L-threonylcarbamoyladenosine(37) in tRNA + AMP + H(+). In terms of biological role, required for the formation of a threonylcarbamoyl group on adenosine at position 37 (t(6)A37) in tRNAs that read codons beginning with adenine. Is involved in the transfer of the threonylcarbamoyl moiety of threonylcarbamoyl-AMP (TC-AMP) to the N6 group of A37, together with TsaE and TsaB. TsaD likely plays a direct catalytic role in this reaction. The chain is tRNA N6-adenosine threonylcarbamoyltransferase from Bacillus cereus (strain ATCC 14579 / DSM 31 / CCUG 7414 / JCM 2152 / NBRC 15305 / NCIMB 9373 / NCTC 2599 / NRRL B-3711).